Here is a 358-residue protein sequence, read N- to C-terminus: Peptide chain release factor 1 (358 aa).

An N5-methylglutamine modification is found at Q233.

This sequence belongs to the prokaryotic/mitochondrial release factor family. Post-translationally, methylated by PrmC. Methylation increases the termination efficiency of RF1.

Its subcellular location is the cytoplasm. Its function is as follows. Peptide chain release factor 1 directs the termination of translation in response to the peptide chain termination codons UAG and UAA. This is Peptide chain release factor 1 from Macrococcus caseolyticus (strain JCSC5402) (Macrococcoides caseolyticum).